The primary structure comprises 120 residues: Small ribosomal subunit protein bS16 (120 aa).

Residues 84 to 120 (KRESRNNPQQGQPKKKAQERAAAAAAAAEKAASEAAA) form a disordered region. Residues 103–120 (RAAAAAAAAEKAASEAAA) show a composition bias toward low complexity.

It belongs to the bacterial ribosomal protein bS16 family.

The polypeptide is Small ribosomal subunit protein bS16 (Beijerinckia indica subsp. indica (strain ATCC 9039 / DSM 1715 / NCIMB 8712)).